Consider the following 303-residue polypeptide: Foldase protein PrsA (303 aa).

An N-terminal signal peptide occupies residues 1–20 (MMKKWLLAAASLLMVVTLAG). C21 carries N-palmitoyl cysteine lipidation. C21 is lipidated: S-diacylglycerol cysteine. Residues 137-233 (EPKVEVQHIL…YGYHVIRMIK (97 aa)) enclose the PpiC domain.

It belongs to the PrsA family.

It localises to the cell membrane. It carries out the reaction [protein]-peptidylproline (omega=180) = [protein]-peptidylproline (omega=0). In terms of biological role, plays a major role in protein secretion by helping the post-translocational extracellular folding of several secreted proteins. The chain is Foldase protein PrsA from Latilactobacillus sakei subsp. sakei (strain 23K) (Lactobacillus sakei subsp. sakei).